The chain runs to 329 residues: D-alanine--D-alanine ligase (329 aa).

The region spanning 120-326 (KLWYDAIGIP…FHEFLADCIN (207 aa)) is the ATP-grasp domain. 150-205 (AFDKWGKVFVKAARQGSSVGCYSVTNKQSVSQAVNDAFGYSEQVLVEKSVKPRELE) contributes to the ATP binding site. Mg(2+)-binding residues include D280, E293, and N295.

This sequence belongs to the D-alanine--D-alanine ligase family. Mg(2+) is required as a cofactor. Requires Mn(2+) as cofactor.

The protein localises to the cytoplasm. The catalysed reaction is 2 D-alanine + ATP = D-alanyl-D-alanine + ADP + phosphate + H(+). The protein operates within cell wall biogenesis; peptidoglycan biosynthesis. Cell wall formation. The protein is D-alanine--D-alanine ligase of Vibrio campbellii (strain ATCC BAA-1116).